A 348-amino-acid chain; its full sequence is MNEPLKSRIDFKQSTLQNEEISLKKGLDFNQDEQFVPYNPQLEAQENEGRLEGEIQSALKPRKSLWKRLITVASTILGVSVIAQAGQWIYQSWINSDWIALGAASAGGLIVIAGMGSVITEWRRIYRLRQRADERDKARELLYSHAIGNGRPFCEDLAKQAGINSQHPAYIRWQSTLHDTHNDREILELYSQLVQPILDKQARAEISRSAAESTLMIAVSPLAMVDMAFIGWRNIRLINRIAQIYGIELGYYSRLKLFRLVLVNIAFAGATELVREVGMDWLSQDLAARLSTRAAQGIGAGLLTARLGIKAMELCRPLPWIDNKPKLSDFRKELIGQLKNTLGNKKKE.

The next 2 helical transmembrane spans lie at 69-89 and 99-119; these read LITV…GQWI and IALG…GSVI.

This sequence belongs to the UPF0283 family.

The protein localises to the cell inner membrane. This chain is UPF0283 membrane protein PMI1371, found in Proteus mirabilis (strain HI4320).